A 336-amino-acid chain; its full sequence is Pentalenene synthase (336 aa).

Residues aspartate 80, aspartate 84, asparagine 219, serine 223, and glutamate 227 each coordinate Mg(2+). Residues 80 to 84 (DDLFD) carry the DDXXD motif motif.

The protein belongs to the terpene synthase family. Monomer. Mg(2+) is required as a cofactor.

It carries out the reaction (2E,6E)-farnesyl diphosphate = pentalenene + diphosphate. The protein operates within antibiotic biosynthesis; neopentalenolactone biosynthesis. Its function is as follows. Catalyzes the cyclization of farnesyl diphosphate (FPP) to the tricyclic sesquiterpene pentalenene in the biosynthesis of neopentalenolactone antibiotic. The polypeptide is Pentalenene synthase (ptlA) (Streptomyces avermitilis (strain ATCC 31267 / DSM 46492 / JCM 5070 / NBRC 14893 / NCIMB 12804 / NRRL 8165 / MA-4680)).